A 477-amino-acid chain; its full sequence is Cysteine--tRNA ligase (477 aa).

Position 28 (C28) interacts with Zn(2+). A 'HIGH' region motif is present at residues 30–40; the sequence is PTVYDYAHIGN. Zn(2+) is bound by residues C213, H238, and E242. The 'KMSKS' region motif lies at 270–274; sequence KMSKS. Position 273 (K273) interacts with ATP.

This sequence belongs to the class-I aminoacyl-tRNA synthetase family. As to quaternary structure, monomer. The cofactor is Zn(2+).

It is found in the cytoplasm. The catalysed reaction is tRNA(Cys) + L-cysteine + ATP = L-cysteinyl-tRNA(Cys) + AMP + diphosphate. This Chlamydia trachomatis serovar A (strain ATCC VR-571B / DSM 19440 / HAR-13) protein is Cysteine--tRNA ligase.